Consider the following 647-residue polypeptide: Macrolide export ATP-binding/permease protein MacB (647 aa).

The ABC transporter domain occupies 5–243 (LELKGIERSY…TQTPSLTSKI (239 aa)). 41-48 (GASGSGKS) is a binding site for ATP. 4 helical membrane passes run 272 to 292 (LLTM…LVIG), 522 to 542 (LFLT…VMNI), 576 to 596 (ILVC…IAFI), and 610 to 630 (PIAL…FGFL).

This sequence belongs to the ABC transporter superfamily. Macrolide exporter (TC 3.A.1.122) family. As to quaternary structure, homodimer. Part of the tripartite efflux system MacAB-TolC, which is composed of an inner membrane transporter, MacB, a periplasmic membrane fusion protein, MacA, and an outer membrane component, TolC. The complex forms a large protein conduit and can translocate molecules across both the inner and outer membranes. Interacts with MacA.

It localises to the cell inner membrane. Its function is as follows. Part of the tripartite efflux system MacAB-TolC. MacB is a non-canonical ABC transporter that contains transmembrane domains (TMD), which form a pore in the inner membrane, and an ATP-binding domain (NBD), which is responsible for energy generation. Confers resistance against macrolides. This chain is Macrolide export ATP-binding/permease protein MacB, found in Photorhabdus laumondii subsp. laumondii (strain DSM 15139 / CIP 105565 / TT01) (Photorhabdus luminescens subsp. laumondii).